Here is a 278-residue protein sequence, read N- to C-terminus: NAD kinase (278 aa).

The active-site Proton acceptor is Asp-67. NAD(+) is bound by residues 67–68 (DG), Arg-72, 137–138 (NE), Lys-148, Arg-165, Asp-167, 178–183 (TGYAMS), Ala-202, and Gln-237.

The protein belongs to the NAD kinase family. The cofactor is a divalent metal cation.

Its subcellular location is the cytoplasm. The catalysed reaction is NAD(+) + ATP = ADP + NADP(+) + H(+). Its function is as follows. Involved in the regulation of the intracellular balance of NAD and NADP, and is a key enzyme in the biosynthesis of NADP. Catalyzes specifically the phosphorylation on 2'-hydroxyl of the adenosine moiety of NAD to yield NADP. The protein is NAD kinase of Thermococcus kodakarensis (strain ATCC BAA-918 / JCM 12380 / KOD1) (Pyrococcus kodakaraensis (strain KOD1)).